The chain runs to 311 residues: Urease accessory protein UreD 2 (311 aa).

Belongs to the UreD family. As to quaternary structure, ureD, UreF and UreG form a complex that acts as a GTP-hydrolysis-dependent molecular chaperone, activating the urease apoprotein by helping to assemble the nickel containing metallocenter of UreC. The UreE protein probably delivers the nickel.

Its subcellular location is the cytoplasm. Its function is as follows. Required for maturation of urease via the functional incorporation of the urease nickel metallocenter. In Methylorubrum extorquens (strain PA1) (Methylobacterium extorquens), this protein is Urease accessory protein UreD 2.